We begin with the raw amino-acid sequence, 571 residues long: Sialate:O-sulfotransferase 2 (571 aa).

Residues 1–20 are Cytoplasmic-facing; sequence MAKLWFKFQRCFRYFRRKPV. Residues 21–43 form a helical membrane-spanning segment; the sequence is RFFTLLAIYLTAGSLVFLHSGFV. The Extracellular segment spans residues 44-571; that stretch reads GQPAVPQSQA…TGVPDAYGPR (528 aa). WSC domains are found at residues 133–225 and 236–330; these read KAKY…YRLQ and SAVF…YQTQ. N-linked (GlcNAc...) asparagine glycosylation is found at N195 and N248.

This sequence belongs to the WSCD family.

The protein localises to the golgi apparatus membrane. Functionally, sialate:O-sulfotransferase that catalyzes 8-O-sulfation at the Sia-glycan level using 3'-phosphoadenosine 5'-phosphosulfate (PAPS) as a donor, forming 8-O-sulfated Sia (Sia8S)-glycans. Displays selectivity toward glycoproteins such as TF/transferrin. The sequence is that of Sialate:O-sulfotransferase 2 (Wscd2) from Mus musculus (Mouse).